The primary structure comprises 332 residues: Ketol-acid reductoisomerase (NADP(+)) 2 (332 aa).

One can recognise a KARI N-terminal Rossmann domain in the interval 2–182 (AELFYDADAD…GGTRAGVIRT (181 aa)). Residues 25–28 (YGSQ), S51, S53, and 83–86 (DPIQ) contribute to the NADP(+) site. H108 is an active-site residue. G134 lines the NADP(+) pocket. The KARI C-terminal knotted domain occupies 183-328 (TFTEETETDL…KELRKLMSWV (146 aa)). Residues D191, E195, E227, and E231 each contribute to the Mg(2+) site. S252 lines the substrate pocket.

The protein belongs to the ketol-acid reductoisomerase family. It depends on Mg(2+) as a cofactor.

The catalysed reaction is (2R)-2,3-dihydroxy-3-methylbutanoate + NADP(+) = (2S)-2-acetolactate + NADPH + H(+). It catalyses the reaction (2R,3R)-2,3-dihydroxy-3-methylpentanoate + NADP(+) = (S)-2-ethyl-2-hydroxy-3-oxobutanoate + NADPH + H(+). It participates in amino-acid biosynthesis; L-isoleucine biosynthesis; L-isoleucine from 2-oxobutanoate: step 2/4. Its pathway is amino-acid biosynthesis; L-valine biosynthesis; L-valine from pyruvate: step 2/4. Functionally, involved in the biosynthesis of branched-chain amino acids (BCAA). Catalyzes an alkyl-migration followed by a ketol-acid reduction of (S)-2-acetolactate (S2AL) to yield (R)-2,3-dihydroxy-isovalerate. In the isomerase reaction, S2AL is rearranged via a Mg-dependent methyl migration to produce 3-hydroxy-3-methyl-2-ketobutyrate (HMKB). In the reductase reaction, this 2-ketoacid undergoes a metal-dependent reduction by NADPH to yield (R)-2,3-dihydroxy-isovalerate. This Streptomyces coelicolor (strain ATCC BAA-471 / A3(2) / M145) protein is Ketol-acid reductoisomerase (NADP(+)) 2.